We begin with the raw amino-acid sequence, 227 residues long: MSLEQLVTINDLNVDIGKQLIKIARDSIKNRFKLVNLNLDEYKNPVLNKRGLAFVTIEKIEDERTSLRGCIGYVEAVAPLKEIVSKAAVAAAFSDPRFPPLSKSELNDILIEVTILTKPEEISVKDRWKLPSFINVGEDGLIVEYGIMYSGLLLPQVASEYCWDSETFLAETCIKAGLKPDCWLNERVKIKKFNGLIYREINKNTDEIIVLRPSDIKCKKSQHSNLQ.

The AMMECR1 domain maps to 15-209; the sequence is DIGKQLIKIA…EINKNTDEII (195 aa).

This chain is Protein Saci_0792, found in Sulfolobus acidocaldarius (strain ATCC 33909 / DSM 639 / JCM 8929 / NBRC 15157 / NCIMB 11770).